A 651-amino-acid chain; its full sequence is Acetyl-coenzyme A synthetase (651 aa).

Residues 189-192, threonine 311, and asparagine 335 each bind CoA; that span reads RGGK. Residues 387–389, 411–416, aspartate 500, and arginine 515 each bind ATP; these read GEP and DTWWQT. A CoA-binding site is contributed by serine 523. Arginine 526 contacts ATP. The Mg(2+) site is built by valine 537, histidine 539, and valine 542. CoA is bound at residue arginine 584. Lysine 609 carries the N6-acetyllysine modification.

It belongs to the ATP-dependent AMP-binding enzyme family. Mg(2+) serves as cofactor. Post-translationally, acetylated. Deacetylation by the SIR2-homolog deacetylase activates the enzyme.

It carries out the reaction acetate + ATP + CoA = acetyl-CoA + AMP + diphosphate. In terms of biological role, catalyzes the conversion of acetate into acetyl-CoA (AcCoA), an essential intermediate at the junction of anabolic and catabolic pathways. AcsA undergoes a two-step reaction. In the first half reaction, AcsA combines acetate with ATP to form acetyl-adenylate (AcAMP) intermediate. In the second half reaction, it can then transfer the acetyl group from AcAMP to the sulfhydryl group of CoA, forming the product AcCoA. The protein is Acetyl-coenzyme A synthetase of Rhizobium leguminosarum bv. trifolii (strain WSM2304).